The primary structure comprises 342 residues: KLSDSQTMALFTVFLLFLSSSLALSSPILKEILIEAPSYAPNSFTFDSTNKGFYTSVQDGRVIKYEGPNSGFVDFAYASPYWNKAFCENSTDAEKRPLCGRTYDISYNLQNNQLYIVDCYYHLSVVGSEGGHATQLATSVDGVPFKWLYAVTVDQRTGIVYFTDVSTLYDDRGVQQIMDTSDKTGRLIKYDPSTKETTLLLKELHVPGGAEVSADSSFVLVAEFLSHQIVKYWLEGPKKGTAEVLVKIPNPGNIKRNADGHFWVSSSEELDGNMHGRVDPKGIKFDEFGNILEVIPLPPPFAGEHFEQIQEHDGLLYIGTLFHGSVGILVYDKKGNSFVSSH.

The signal sequence occupies residues 1–20 (KLSDSQTMALFTVFLLFLSS). An N-linked (GlcNAc...) asparagine glycan is attached at Asn89.

This sequence belongs to the strictosidine synthase family. In terms of assembly, monomer.

It localises to the vacuole. It catalyses the reaction 3alpha(S)-strictosidine + H2O = secologanin + tryptamine. The protein operates within alkaloid biosynthesis; 3alpha(S)-strictosidine biosynthesis; 3alpha(S)-strictosidine from secologanin and tryptamine: step 1/1. Catalyzes the stereospecific condensation of tryptamine with secologanin to form strictosidine, the key intermediate of indole alkaloid biosynthesis. In Rauvolfia mannii, this protein is Strictosidine synthase (STR1).